Here is a 320-residue protein sequence, read N- to C-terminus: o-succinylbenzoate synthase (320 aa).

Lysine 133 functions as the Proton donor in the catalytic mechanism. The Mg(2+) site is built by aspartate 161, glutamate 190, and aspartate 213. Lysine 235 serves as the catalytic Proton acceptor.

It belongs to the mandelate racemase/muconate lactonizing enzyme family. MenC type 1 subfamily. Requires a divalent metal cation as cofactor.

The catalysed reaction is (1R,6R)-6-hydroxy-2-succinyl-cyclohexa-2,4-diene-1-carboxylate = 2-succinylbenzoate + H2O. It functions in the pathway quinol/quinone metabolism; 1,4-dihydroxy-2-naphthoate biosynthesis; 1,4-dihydroxy-2-naphthoate from chorismate: step 4/7. The protein operates within quinol/quinone metabolism; menaquinone biosynthesis. Its function is as follows. Converts 2-succinyl-6-hydroxy-2,4-cyclohexadiene-1-carboxylate (SHCHC) to 2-succinylbenzoate (OSB). In Escherichia coli O9:H4 (strain HS), this protein is o-succinylbenzoate synthase.